Consider the following 352-residue polypeptide: Protein RecA (352 aa).

67–74 (GPESSGKT) is an ATP binding site.

Belongs to the RecA family.

Its subcellular location is the cytoplasm. Its function is as follows. Can catalyze the hydrolysis of ATP in the presence of single-stranded DNA, the ATP-dependent uptake of single-stranded DNA by duplex DNA, and the ATP-dependent hybridization of homologous single-stranded DNAs. It interacts with LexA causing its activation and leading to its autocatalytic cleavage. The polypeptide is Protein RecA (Chlamydia trachomatis serovar L2 (strain ATCC VR-902B / DSM 19102 / 434/Bu)).